A 785-amino-acid polypeptide reads, in one-letter code: DNA ligase (785 aa).

NAD(+)-binding positions include 32 to 36, 81 to 82, and Glu-121; these read DAEYD and SL. Lys-123 serves as the catalytic N6-AMP-lysine intermediate. Positions 144, 181, 297, and 321 each coordinate NAD(+). Cys-415, Cys-418, Cys-445, and Cys-451 together coordinate Zn(2+). Residues 702–785 enclose the BRCT domain; sequence VEGLPLAGET…AFLKGHGISA (84 aa).

The protein belongs to the NAD-dependent DNA ligase family. LigA subfamily. Mg(2+) serves as cofactor. Mn(2+) is required as a cofactor.

It carries out the reaction NAD(+) + (deoxyribonucleotide)n-3'-hydroxyl + 5'-phospho-(deoxyribonucleotide)m = (deoxyribonucleotide)n+m + AMP + beta-nicotinamide D-nucleotide.. In terms of biological role, DNA ligase that catalyzes the formation of phosphodiester linkages between 5'-phosphoryl and 3'-hydroxyl groups in double-stranded DNA using NAD as a coenzyme and as the energy source for the reaction. It is essential for DNA replication and repair of damaged DNA. This chain is DNA ligase, found in Pseudomonas fluorescens (strain Pf0-1).